The primary structure comprises 292 residues: NAD kinase (292 aa).

The Proton acceptor role is filled by Asp-73. NAD(+) contacts are provided by residues 73–74, 147–148, His-158, Arg-175, Asp-177, 188–193, and Gln-247; these read DG, NE, and TAYSLS.

It belongs to the NAD kinase family. A divalent metal cation is required as a cofactor.

Its subcellular location is the cytoplasm. It catalyses the reaction NAD(+) + ATP = ADP + NADP(+) + H(+). Functionally, involved in the regulation of the intracellular balance of NAD and NADP, and is a key enzyme in the biosynthesis of NADP. Catalyzes specifically the phosphorylation on 2'-hydroxyl of the adenosine moiety of NAD to yield NADP. The sequence is that of NAD kinase from Escherichia coli (strain UTI89 / UPEC).